A 309-amino-acid polypeptide reads, in one-letter code: Anamorsin (309 aa).

Residues 6-172 are N-terminal SAM-like domain; it reads ISPGQLVAVF…KPNFEVGSSS (167 aa). Residues 173-222 are linker; the sequence is QLKLLHKKSSSVKPVVDPATAKLWTLSANDMEDDSMDLIDSDELLDPEDL. A phosphoserine mark is found at serine 182, serine 183, and serine 213. Residues cysteine 235, cysteine 244, cysteine 247, and cysteine 249 each contribute to the [2Fe-2S] cluster site. The segment at 235–249 is fe-S binding site A; the sequence is CGEGKKRKACKNCTC. Serine 269 is modified (phosphoserine). [4Fe-4S] cluster contacts are provided by cysteine 271, cysteine 274, cysteine 282, and cysteine 285. 2 short sequence motifs (cx2C motif) span residues 271–274 and 282–285; these read CGNC and CANC. Residues 271–285 are fe-S binding site B; the sequence is CGNCYLGDAFRCANC. 2 positions are modified to phosphoserine: serine 302 and serine 304.

This sequence belongs to the anamorsin family. In terms of assembly, monomer. Interacts with NDOR1. Interacts with CHCHD4. Requires [2Fe-2S] cluster as cofactor. [4Fe-4S] cluster serves as cofactor.

The protein resides in the cytoplasm. Its subcellular location is the nucleus. The protein localises to the mitochondrion intermembrane space. Component of the cytosolic iron-sulfur (Fe-S) protein assembly (CIA) machinery required for the maturation of extramitochondrial Fe-S proteins. Part of an electron transfer chain functioning in an early step of cytosolic Fe-S biogenesis, facilitating the de novo assembly of a [4Fe-4S] cluster on the scaffold complex NUBP1-NUBP2. Electrons are transferred to CIAPIN1 from NADPH via the FAD- and FMN-containing protein NDOR1. NDOR1-CIAPIN1 are also required for the assembly of the diferric tyrosyl radical cofactor of ribonucleotide reductase (RNR), probably by providing electrons for reduction during radical cofactor maturation in the catalytic small subunit. Has anti-apoptotic effects in the cell. Involved in negative control of cell death upon cytokine withdrawal. Promotes development of hematopoietic cells. This chain is Anamorsin, found in Rattus norvegicus (Rat).